A 243-amino-acid chain; its full sequence is Endochitinase (243 aa).

Disulfide bonds link cysteine 23-cysteine 85, cysteine 97-cysteine 105, and cysteine 223-cysteine 236. Glutamate 67 (proton donor) is an active-site residue.

It is found in the vacuole. It carries out the reaction Random endo-hydrolysis of N-acetyl-beta-D-glucosaminide (1-&gt;4)-beta-linkages in chitin and chitodextrins.. Its function is as follows. Defense against chitin-containing fungal pathogens. Shows activity on chitin, tetra-N-acetylglucosamine and chitosan. The protein is Endochitinase of Carica papaya (Papaya).